A 483-amino-acid polypeptide reads, in one-letter code: 6-phosphogluconate dehydrogenase, decarboxylating (483 aa).

NADP(+)-binding positions include 10 to 15 (GLAVMG) and 33 to 35 (NRT). At Lys38 the chain carries N6-acetyllysine. A Phosphoserine modification is found at Ser57. N6-acetyllysine is present on Lys59. Residues 75 to 77 (VKA) and Asn103 contribute to the NADP(+) site. Substrate is bound by residues Asn103 and 129-131 (SGG). Residue Ser129 is modified to Phosphoserine. Lys184 functions as the Proton acceptor in the catalytic mechanism. A substrate-binding site is contributed by 187–188 (HN). Glu191 serves as the catalytic Proton donor. Residues Tyr192, Lys261, and Arg288 each coordinate substrate. Position 309 is an N6-acetyllysine (Lys309). 2 residues coordinate substrate: Arg447 and His453. Position 478–481 (478–481 (SSSY)) interacts with NADP(+).

Belongs to the 6-phosphogluconate dehydrogenase family. Homodimer.

It localises to the cytoplasm. It catalyses the reaction 6-phospho-D-gluconate + NADP(+) = D-ribulose 5-phosphate + CO2 + NADPH. The protein operates within carbohydrate degradation; pentose phosphate pathway; D-ribulose 5-phosphate from D-glucose 6-phosphate (oxidative stage): step 3/3. In terms of biological role, catalyzes the oxidative decarboxylation of 6-phosphogluconate to ribulose 5-phosphate and CO(2), with concomitant reduction of NADP to NADPH. The polypeptide is 6-phosphogluconate dehydrogenase, decarboxylating (PGD) (Homo sapiens (Human)).